The chain runs to 234 residues: MYLLPNTTTITKSTMPHPQQPHAILEGLCKEQSLALAPEMVDKLVEYGRLLEEWNNKINLISRKEDAPIIIKHIFHSLLITQHHTFQTGEKVLDLGTGGGLPGIPLAIIAPQATFLLVDATGKKITACQEMIATLKLTNVTARHLRVEELHGETFHTIVSRQVALLNKLCAYGEPLLHEKGKLICLKGGSLEQEIKQSLEASQKHHGFPARVEEHPIDEVSPIFSEKKIVIAYR.

S-adenosyl-L-methionine contacts are provided by residues glycine 96, leucine 101, 119 to 121 (DAT), 147 to 148 (VE), and arginine 161.

It belongs to the methyltransferase superfamily. RNA methyltransferase RsmG family.

It is found in the cytoplasm. Functionally, specifically methylates the N7 position of a guanine in 16S rRNA. The polypeptide is Ribosomal RNA small subunit methyltransferase G (Chlorobium chlorochromatii (strain CaD3)).